The primary structure comprises 157 residues: Endoribonuclease YbeY (157 aa).

The Zn(2+) site is built by H123, H127, and H133.

It belongs to the endoribonuclease YbeY family. It depends on Zn(2+) as a cofactor.

The protein localises to the cytoplasm. Functionally, single strand-specific metallo-endoribonuclease involved in late-stage 70S ribosome quality control and in maturation of the 3' terminus of the 16S rRNA. In Limosilactobacillus fermentum (strain NBRC 3956 / LMG 18251) (Lactobacillus fermentum), this protein is Endoribonuclease YbeY.